Consider the following 330-residue polypeptide: HTH-type transcriptional regulator GanR (330 aa).

The HTH lacI-type domain maps to 2–57; that stretch reads ATIKDIAQEAGFSISTVSRVLNNDESLSVPDETREKIYEAAEKLNYRKKTVRPLVK. Residues 4 to 23 constitute a DNA-binding region (H-T-H motif); it reads IKDIAQEAGFSISTVSRVLN.

Negatively regulates the expression of the ganSPQAB operon. Inhibits transcription of the operon by binding to an operator in the promoter region. In the presence of galactobiose, GanR dissociates from the promoter, resulting in the expression of the gan operon. The protein is HTH-type transcriptional regulator GanR of Bacillus subtilis (strain 168).